The following is a 456-amino-acid chain: Endoglucanase A (456 aa).

A signal peptide spans 1-30; sequence MSRIRRFLATALAAATAGVGAIVTAIASAG. Positions 31–322 are catalytic; the sequence is PAHAYDSPFY…RAYELAMNAA (292 aa). The active site involves D113. Cystine bridges form between C114-C159 and C267-C302. Catalysis depends on D151, which acts as the Proton donor. The tract at residues 255–280 is disordered; the sequence is SRNGNGPLGSEWCDPPGRATGTWSTT. D300 serves as the catalytic Nucleophile. The tract at residues 321–358 is disordered; the sequence is AAPPTYSPSPTPSTPSPSPSQSDPGSPSPSPSQPPAGR. Positions 323–355 are linker ('hinge') (Pro-Ser box); sequence PPTYSPSPTPSTPSPSPSQSDPGSPSPSPSQPP. Residues 325–338 show a composition bias toward pro residues; that stretch reads TYSPSPTPSTPSPS. Residues 353-456 enclose the CBM2 domain; the sequence is QPPAGRACEA…LSSSITCSAS (104 aa). C360 and C453 are joined by a disulfide.

It belongs to the glycosyl hydrolase 6 (cellulase B) family.

The catalysed reaction is Endohydrolysis of (1-&gt;4)-beta-D-glucosidic linkages in cellulose, lichenin and cereal beta-D-glucans.. The protein is Endoglucanase A (celA) of Thermobispora bispora (Microbispora bispora).